The following is a 342-amino-acid chain: Holliday junction branch migration complex subunit RuvB (342 aa).

A large ATPase domain (RuvB-L) region spans residues Met-1–Tyr-184. ATP is bound by residues Leu-23, Arg-24, Gly-65, Lys-68, Thr-69, Thr-70, Glu-131–Tyr-133, Arg-174, Tyr-184, and Arg-221. Mg(2+) is bound at residue Thr-69. The segment at Asp-185–Asn-255 is small ATPAse domain (RuvB-S). Residues Arg-258–Asp-342 form a head domain (RuvB-H) region. Residues Arg-313 and Arg-318 each contribute to the DNA site.

It belongs to the RuvB family. As to quaternary structure, homohexamer. Forms an RuvA(8)-RuvB(12)-Holliday junction (HJ) complex. HJ DNA is sandwiched between 2 RuvA tetramers; dsDNA enters through RuvA and exits via RuvB. An RuvB hexamer assembles on each DNA strand where it exits the tetramer. Each RuvB hexamer is contacted by two RuvA subunits (via domain III) on 2 adjacent RuvB subunits; this complex drives branch migration. In the full resolvosome a probable DNA-RuvA(4)-RuvB(12)-RuvC(2) complex forms which resolves the HJ.

Its subcellular location is the cytoplasm. The enzyme catalyses ATP + H2O = ADP + phosphate + H(+). The RuvA-RuvB-RuvC complex processes Holliday junction (HJ) DNA during genetic recombination and DNA repair, while the RuvA-RuvB complex plays an important role in the rescue of blocked DNA replication forks via replication fork reversal (RFR). RuvA specifically binds to HJ cruciform DNA, conferring on it an open structure. The RuvB hexamer acts as an ATP-dependent pump, pulling dsDNA into and through the RuvAB complex. RuvB forms 2 homohexamers on either side of HJ DNA bound by 1 or 2 RuvA tetramers; 4 subunits per hexamer contact DNA at a time. Coordinated motions by a converter formed by DNA-disengaged RuvB subunits stimulates ATP hydrolysis and nucleotide exchange. Immobilization of the converter enables RuvB to convert the ATP-contained energy into a lever motion, pulling 2 nucleotides of DNA out of the RuvA tetramer per ATP hydrolyzed, thus driving DNA branch migration. The RuvB motors rotate together with the DNA substrate, which together with the progressing nucleotide cycle form the mechanistic basis for DNA recombination by continuous HJ branch migration. Branch migration allows RuvC to scan DNA until it finds its consensus sequence, where it cleaves and resolves cruciform DNA. The sequence is that of Holliday junction branch migration complex subunit RuvB from Phocaeicola vulgatus (strain ATCC 8482 / DSM 1447 / JCM 5826 / CCUG 4940 / NBRC 14291 / NCTC 11154) (Bacteroides vulgatus).